The primary structure comprises 65 residues: Large ribosomal subunit protein bL35 (65 aa).

Belongs to the bacterial ribosomal protein bL35 family.

In Buchnera aphidicola subsp. Cinara cedri (strain Cc), this protein is Large ribosomal subunit protein bL35.